Consider the following 264-residue polypeptide: MPLPTMTHSSSFLRLPATSSPHPPPADDASAAYAVVVLNQRLPRFAPLLWDRARLRVCADGGANRVFDGMPELLPAEDPDQVRMRYKPDVIKGDMDSIRPEVKEYYSNLGAEIVDESHDQDTTDLHKCVSFITRNPPGSEESNLYILVLGALGGRFDHEMGNINVLYRFSNIRIVLLSDDCSIFLLPKTHSHEIHIERSIEGPHCGLIPMGSPSASTTTTGLRWNLDNTSMSYGGLISTSNIVEEETVRITSDSDLIWTISLRN.

The segment covering 1–12 (MPLPTMTHSSSF) has biased composition (polar residues). Positions 1 to 27 (MPLPTMTHSSSFLRLPATSSPHPPPAD) are disordered.

It belongs to the thiamine pyrophosphokinase family.

It localises to the cytoplasm. The protein localises to the cytosol. The catalysed reaction is thiamine + ATP = thiamine diphosphate + AMP + H(+). It participates in cofactor biosynthesis; thiamine diphosphate biosynthesis; thiamine diphosphate from thiamine: step 1/1. In terms of biological role, catalyzes the phosphorylation of thiamine to thiamine pyrophosphate (TPP). TPP is an active cofactor for enzymes involved in glycolysis and energy production. Plant leaves require high levels of TPP for photosynthesis and carbohydrate metabolism. The sequence is that of Thiamine pyrophosphokinase 1 (TPK1) from Oryza sativa subsp. japonica (Rice).